The following is a 72-amino-acid chain: Translation initiation factor IF-1 (72 aa).

The S1-like domain occupies 1–72; the sequence is MSKEDVIEMQ…TRGRITWRAK (72 aa).

The protein belongs to the IF-1 family. In terms of assembly, component of the 30S ribosomal translation pre-initiation complex which assembles on the 30S ribosome in the order IF-2 and IF-3, IF-1 and N-formylmethionyl-tRNA(fMet); mRNA recruitment can occur at any time during PIC assembly.

It is found in the cytoplasm. Its function is as follows. One of the essential components for the initiation of protein synthesis. Stabilizes the binding of IF-2 and IF-3 on the 30S subunit to which N-formylmethionyl-tRNA(fMet) subsequently binds. Helps modulate mRNA selection, yielding the 30S pre-initiation complex (PIC). Upon addition of the 50S ribosomal subunit IF-1, IF-2 and IF-3 are released leaving the mature 70S translation initiation complex. The chain is Translation initiation factor IF-1 from Clostridium acetobutylicum (strain ATCC 824 / DSM 792 / JCM 1419 / IAM 19013 / LMG 5710 / NBRC 13948 / NRRL B-527 / VKM B-1787 / 2291 / W).